We begin with the raw amino-acid sequence, 667 residues long: E3 ubiquitin-protein ligase Midline-1 (667 aa).

An RING-type zinc finger spans residues 10-60 (CPICLELFEDPLLLPCAHSLCFNCAHRILVSHCATNEPVESINAFQCPTCR). Residues serine 92 and serine 96 each carry the phosphoserine modification. B box-type zinc fingers lie at residues 116 to 165 (KVLC…IEPI) and 172 to 212 (GLMC…VAAL). Zn(2+) contacts are provided by cysteine 119, cysteine 122, cysteine 134, cysteine 137, cysteine 142, cysteine 145, histidine 150, histidine 159, cysteine 175, histidine 178, cysteine 198, and histidine 204. The stretch at 205-264 (RDHQVAALSERYDKLKQNLESNLTNLIKRNTELETLLAKLIQTCQHVEVNASRQEAKLTE) forms a coiled coil. One can recognise a COS domain in the interval 320-379 (LKENDHARFLQTAKNITERVSMATASSQVLIPEINLNDTFDTFALDFSREKKLLECLDYL). A Fibronectin type-III domain is found at 381 to 484 (APNPPTIREE…EPGKLKTNSQ (104 aa)). Over residues 471–485 (SRSSEPGKLKTNSQP) the composition is skewed to polar residues. The tract at residues 471-524 (SRSSEPGKLKTNSQPFKLDPKSAHRKLKVSHDNLTVERDESSSKKSHTPERFTS) is disordered. The B30.2/SPRY domain maps to 482–659 (NSQPFKLDPK…IITGLPIPDH (178 aa)). A compositionally biased stretch (basic and acidic residues) spans 499-520 (VSHDNLTVERDESSSKKSHTPE). Serine 511 is subject to Phosphoserine.

It belongs to the TRIM/RBCC family. As to quaternary structure, homodimer or heterodimer with MID2. Interacts with IGBP1.

It is found in the cytoplasm. It localises to the cytoskeleton. The enzyme catalyses S-ubiquitinyl-[E2 ubiquitin-conjugating enzyme]-L-cysteine + [acceptor protein]-L-lysine = [E2 ubiquitin-conjugating enzyme]-L-cysteine + N(6)-ubiquitinyl-[acceptor protein]-L-lysine.. Its function is as follows. Has E3 ubiquitin ligase activity towards IGBP1, promoting its monoubiquitination, which results in deprotection of the catalytic subunit of protein phosphatase PP2A, and its subsequent degradation by polyubiquitination. The polypeptide is E3 ubiquitin-protein ligase Midline-1 (Mid1) (Rattus norvegicus (Rat)).